The primary structure comprises 252 residues: Orotidine 5'-phosphate decarboxylase (252 aa).

Substrate-binding positions include Asp24, Lys46, 73–82, Thr137, Arg199, Gln208, Gly228, and Arg229; that span reads DLKFHDIPNT. Lys75 serves as the catalytic Proton donor.

It belongs to the OMP decarboxylase family. Type 1 subfamily. Homodimer.

It carries out the reaction orotidine 5'-phosphate + H(+) = UMP + CO2. It functions in the pathway pyrimidine metabolism; UMP biosynthesis via de novo pathway; UMP from orotate: step 2/2. Functionally, catalyzes the decarboxylation of orotidine 5'-monophosphate (OMP) to uridine 5'-monophosphate (UMP). This is Orotidine 5'-phosphate decarboxylase from Moorella thermoacetica (strain ATCC 39073 / JCM 9320).